Consider the following 228-residue polypeptide: MHPSARLYNNIALWFYDYLVHSIFMVYGWHCPTKSVGLPFFSSHVGPKHMDVGVGTGYFPVAVRKSSRKRNGQLKPQWPQKLMLVDLNPNCTAMAATRVGAPDCTETLTADVLQPIPAAGKHETFDSLSLMNVLHCLPGTSESKAQAFGHLKPFLKEDGVLFGSTILGRGVEHNRFGRLVMWLSNSLGIFHNYGDHPDDFVRALQKDFNQVEHVVVGRVLLFTAKEPN.

This sequence belongs to the methyltransferase superfamily.

It functions in the pathway secondary metabolite biosynthesis; terpenoid biosynthesis. Its pathway is mycotoxin biosynthesis. Its function is as follows. Methyltransferase; part of the gene cluster that mediates the biosynthesis of the neurotoxin verrucosidin, a methylated alpha-pyrone polyketide that inhibits oxidative phosphorylation in mitochondria and thereby causes neurological diseases. The carbon backbone of verrucosidin is synthesized by the HR-PKS verA, and further modified by the other verrucodidin cluster enzymes. The protein is Methyltransferase verB of Penicillium polonicum.